The chain runs to 495 residues: Glutamate--tRNA ligase (495 aa).

The short motif at 12–22 is the 'HIGH' region element; that stretch reads PSPTGHLHIGN. Positions 259–263 match the 'KMSKS' region motif; the sequence is KLSKR. Lysine 262 is a binding site for ATP.

This sequence belongs to the class-I aminoacyl-tRNA synthetase family. Glutamate--tRNA ligase type 1 subfamily. In terms of assembly, monomer.

The protein localises to the cytoplasm. The enzyme catalyses tRNA(Glu) + L-glutamate + ATP = L-glutamyl-tRNA(Glu) + AMP + diphosphate. Its function is as follows. Catalyzes the attachment of glutamate to tRNA(Glu) in a two-step reaction: glutamate is first activated by ATP to form Glu-AMP and then transferred to the acceptor end of tRNA(Glu). In Ligilactobacillus salivarius (strain UCC118) (Lactobacillus salivarius), this protein is Glutamate--tRNA ligase.